The primary structure comprises 153 residues: Late embryogenesis abundant protein B19.4 (153 aa).

The disordered stretch occupies residues methionine 1–serine 153. 3 stretches are compositionally biased toward basic and acidic residues: residues glutamate 7–glutamate 19, glutamate 32–arginine 122, and glycine 133–serine 153. Tandem repeats lie at residues arginine 43–histidine 62, lysine 63–histidine 82, lysine 83–histidine 102, and lysine 103–arginine 122. Positions arginine 43–arginine 122 are 4 X 20 AA tandem repeats.

Belongs to the small hydrophilic plant seed protein family.

Its function is as follows. Lea proteins are late embryonic proteins abundant in higher plant seed embryos. This chain is Late embryogenesis abundant protein B19.4 (B19.4), found in Hordeum vulgare (Barley).